A 608-amino-acid chain; its full sequence is uncharacterized protein (608 aa).

The first 38 residues, 1-38 (MWLQQRLKVFPGLLSSSWARRVLAVSGFLVIIYWYIFS), serve as a signal peptide directing secretion. Topologically, residues 39 to 563 (GSLFRSFWYA…EEHMAKQYRG (525 aa)) are extracellular. N337 carries N-linked (GlcNAc...) asparagine glycosylation. Residues 564 to 584 (LPFLFWFSVASLITLFHLFLF) form a helical membrane-spanning segment. Topologically, residues 585–608 (KLIYNEYCGPGAKPLFRSKEDTSV) are cytoplasmic.

It localises to the membrane. This is an uncharacterized protein from Xenopus tropicalis (Western clawed frog).